A 314-amino-acid chain; its full sequence is Ribosomal protein L11 methyltransferase (314 aa).

4 residues coordinate S-adenosyl-L-methionine: Thr163, Gly184, Asp206, and Asn248.

The protein belongs to the methyltransferase superfamily. PrmA family.

It localises to the cytoplasm. The enzyme catalyses L-lysyl-[protein] + 3 S-adenosyl-L-methionine = N(6),N(6),N(6)-trimethyl-L-lysyl-[protein] + 3 S-adenosyl-L-homocysteine + 3 H(+). Methylates ribosomal protein L11. In Lactobacillus acidophilus (strain ATCC 700396 / NCK56 / N2 / NCFM), this protein is Ribosomal protein L11 methyltransferase.